The sequence spans 863 residues: Potassium/sodium hyperpolarization-activated cyclic nucleotide-gated channel 2 (863 aa).

Positions 1–10 (MDARGGGGRP) are enriched in gly residues. Residues 1–131 (MDARGGGGRP…AGPAGEPRGS (131 aa)) are disordered. At 1 to 188 (MDARGGGGRP…PYSDFRFYWD (188 aa)) the chain is on the cytoplasmic side. Pro residues predominate over residues 17–47 (TPAPGPPPPPPPPAPPQPQPPPAPPPNPTTP). Low complexity predominate over residues 106–128 (GAASGPAAAEEAGSEEAGPAGEP). A phosphoserine mark is found at S119 and S134. Residues 131–182 (SQASFLQRQFGALLQPGVNKFSLRMFGSQKAVEREQERVKSAGAWIIHPYSD) form an involved in subunit assembly region. Residues 189–209 (FTMLLFMVGNLIIIPVGITFF) traverse the membrane as a helical segment. Over 210–213 (KDET) the chain is Extracellular. The chain crosses the membrane as a helical span at residues 214–234 (TAPWIVFNVVSDTFFLMDLVL). Topologically, residues 235–261 (NFRTGIVIEDNTEIILDPEKIKKKYLR) are cytoplasmic. A helical membrane pass occupies residues 262-282 (TWFVVDFVSSIPVDYIFLIVE). Residues 283–290 (KGIDSEVY) are Extracellular-facing. Residues 291 to 311 (KTARALRIVRFTKILSLLRLL) form a helical; Voltage-sensor membrane-spanning segment. At 312–342 (RLSRLIRYIHQWEEIFHMTYDLASAVMRICN) the chain is on the cytoplasmic side. Residues 343 to 363 (LISMMLLLCHWDGCLQFLVPM) traverse the membrane as a helical segment. Residues 364-386 (LQDFPSDCWVSINNMVNHSWSEL) lie on the Extracellular side of the membrane. An N-linked (GlcNAc...) asparagine glycan is attached at N380. Positions 387–408 (YSFALFKAMSHMLCIGYGRQAP) form an intramembrane region, pore-forming. Residues 409–413 (ESMTD) lie on the Extracellular side of the membrane. The chain crosses the membrane as a helical span at residues 414-434 (IWLTMLSMIVGATCYAMFIGH). The Cytoplasmic portion of the chain corresponds to 435-863 (ATALIQSLDS…SARSRLSSNL (429 aa)). 3',5'-cyclic AMP contacts are provided by G581, E582, C584, R591, T592, and R632. S641 is modified (phosphoserine; by PKG/PRKG2). S726 is subject to Phosphoserine. R728 carries the post-translational modification Omega-N-methylarginine. The tract at residues 730–863 (VRRAPPGPLP…SARSRLSSNL (134 aa)) is disordered. Positions 734 to 755 (PPGPLPPAASPGPPAASPPAAP) are enriched in pro residues. Phosphoserine is present on residues S743, S750, and S757. Low complexity-rich tracts occupy residues 756–765 (SSPRAPRTSP) and 778–834 (PALP…AAPS). A phosphoserine mark is found at S840, S842, and S847.

This sequence belongs to the potassium channel HCN family. In terms of assembly, homotetramer. The channel is composed of a homo- or heterotetrameric complex of pore-forming subunits. Heterotetramer with HCN1. Forms an obligate 4:4 complex with accessory subunit PEX5L. Interacts with KCNE2. In terms of processing, phosphorylation at Ser-641 by PRKG2 shifts the voltage-dependence to more negative voltages, hence counteracting the stimulatory effect of cGMP on gating. N-glycosylated; required for cell surface trafficking of HCN2. Post-translationally, S-palmitoylated. As to expression, highly expressed in neonatal and adult ventricle and in brain. Highly expressed in the pyramidal layer in hippocampus, in anterior dorsal nucleus in thalamus, in the mammillary nucleus in hypothalamus, in red nucleus, in trigeminal mesencephalic, spinal and principal nuclei, in cochlear and trapezoid nuclei and in the dorsal tegemental nucleus.

Its subcellular location is the cell membrane. It carries out the reaction Na(+)(in) = Na(+)(out). It catalyses the reaction K(+)(in) = K(+)(out). The enzyme catalyses NH4(+)(in) = NH4(+)(out). Its activity is regulated as follows. Activated by cAMP, and at 10-100 times higher concentrations, also by cGMP. cAMP binding causes a conformation change that leads to the assembly of an active tetramer and channel opening. In the absence of cAMP, the C-terminal region is thought to exert a tonic inhibition on the pore when HCN2 is in a non-tetrameric form. Channel activity is modulated by intracellular chloride ions and pH; acidic pH shifts the activation to more negative voltages. Phosphatidylinositol-4,5- bisphosphate (PIP(2)) acts as a ligand that allosterically opens HCN2 by shifting voltage-dependent channel activation toward depolarized potentials. Inhibited by extracellular cesium ions. Functionally, hyperpolarization-activated ion channel exhibiting weak selectivity for potassium over sodium ions. Contributes to the native pacemaker currents in heart (If) and in neurons (Ih). Can also transport ammonium in the distal nephron. Involved in the initiation of neuropathic pain in sensory neurons. Produces a large instantaneous current. This Rattus norvegicus (Rat) protein is Potassium/sodium hyperpolarization-activated cyclic nucleotide-gated channel 2 (Hcn2).